We begin with the raw amino-acid sequence, 622 residues long: Low affinity potassium transport system protein Kup (622 aa).

Helical transmembrane passes span 9-29 (LPAITLAAIGVVYGDIGTSPL), 49-69 (VFGFLSLIFWLLIFVVSIKYL), 103-123 (VIMGLIGGSFFYGEVVITPAI), 137-157 (PQLDTWIVPLSIIVLTLLFMI), 165-185 (VGKLFAPIMLTWFLILAGLGL), 213-233 (VSFIALGAVVLSITGGEALYA), 247-267 (WFTVVLPSLTLNYFGQGALLL), 276-296 (PFFLLAPDWALIPLLIIAALA), 337-357 (IYIPFVNWMLYVAVVIVIVSF), 363-383 (LAAAYGIAVTGTMVLTSILST), 396-416 (FVALILIAFLCVDIPLFTANL), and 419-439 (LLSGGWLPLSLGTVMFIVMTT).

Belongs to the HAK/KUP transporter (TC 2.A.72) family.

The protein localises to the cell inner membrane. The catalysed reaction is K(+)(in) + H(+)(in) = K(+)(out) + H(+)(out). In terms of biological role, responsible for the low-affinity transport of potassium into the cell. Likely operates as a K(+):H(+) symporter. This Escherichia coli O157:H7 (strain EC4115 / EHEC) protein is Low affinity potassium transport system protein Kup.